A 176-amino-acid polypeptide reads, in one-letter code: Large ribosomal subunit protein bL12m (176 aa).

It belongs to the bacterial ribosomal protein bL12 family. In terms of assembly, component of the mitochondrial large ribosomal subunit (mt-LSU). Mature N.crassa 74S mitochondrial ribosomes consist of a small (37S) and a large (54S) subunit. The 37S small subunit contains a 16S ribosomal RNA (16S mt-rRNA) and 32 different proteins. The 54S large subunit contains a 23S rRNA (23S mt-rRNA) and 42 different proteins.

The protein localises to the mitochondrion. Component of the mitochondrial ribosome (mitoribosome), a dedicated translation machinery responsible for the synthesis of mitochondrial genome-encoded proteins, including at least some of the essential transmembrane subunits of the mitochondrial respiratory chain. The mitoribosomes are attached to the mitochondrial inner membrane and translation products are cotranslationally integrated into the membrane. The chain is Large ribosomal subunit protein bL12m (mrpl12) from Neurospora crassa (strain ATCC 24698 / 74-OR23-1A / CBS 708.71 / DSM 1257 / FGSC 987).